We begin with the raw amino-acid sequence, 112 residues long: UPF0212 protein Mboo_1659 (112 aa).

This sequence belongs to the UPF0212 family.

The chain is UPF0212 protein Mboo_1659 from Methanoregula boonei (strain DSM 21154 / JCM 14090 / 6A8).